Here is a 46-residue protein sequence, read N- to C-terminus: Amine oxidase [flavin-containing] A (46 aa).

Belongs to the flavin monoamine oxidase family. In terms of assembly, monomer, homo- or heterodimer (containing two subunits of similar size). Each subunit contains a covalently bound flavin. Enzymatically active as monomer. FAD serves as cofactor.

The protein localises to the mitochondrion outer membrane. The catalysed reaction is a secondary aliphatic amine + O2 + H2O = a primary amine + an aldehyde + H2O2. The enzyme catalyses a primary methyl amine + O2 + H2O = an aldehyde + H2O2 + NH4(+). It carries out the reaction (R)-adrenaline + O2 + H2O = (R)-3,4-dihydroxymandelaldehyde + methylamine + H2O2. It catalyses the reaction dopamine + O2 + H2O = 3,4-dihydroxyphenylacetaldehyde + H2O2 + NH4(+). The catalysed reaction is tyramine + O2 + H2O = (4-hydroxyphenyl)acetaldehyde + H2O2 + NH4(+). The enzyme catalyses (R)-noradrenaline + O2 + H2O = (R)-3,4-dihydroxymandelaldehyde + H2O2 + NH4(+). It carries out the reaction serotonin + O2 + H2O = (5-hydroxyindol-3-yl)acetaldehyde + H2O2 + NH4(+). It catalyses the reaction kynuramine + O2 + H2O = 3-(2-aminophenyl)-3-oxopropanal + H2O2 + NH4(+). The catalysed reaction is tryptamine + O2 + H2O = indole-3-acetaldehyde + H2O2 + NH4(+). The enzyme catalyses 2-phenylethylamine + O2 + H2O = 2-phenylacetaldehyde + H2O2 + NH4(+). Catalyzes the oxidative deamination of primary and some secondary amine such as neurotransmitters, with concomitant reduction of oxygen to hydrogen peroxide and has important functions in the metabolism of neuroactive and vasoactive amines in the central nervous system and peripheral tissues. Preferentially oxidizes serotonin. Also catalyzes the oxidative deamination of kynuramine to 3-(2-aminophenyl)-3-oxopropanal that can spontaneously condense to 4-hydroxyquinoline. This is Amine oxidase [flavin-containing] A from Ovis aries (Sheep).